The primary structure comprises 36 residues: Pancreatic polypeptide (36 aa).

Residue Phe36 is modified to Phenylalanine amide.

This sequence belongs to the NPY family.

It is found in the secreted. Functionally, hormone secreted by pancreatic cells that acts as a regulator of pancreatic and gastrointestinal functions. The polypeptide is Pancreatic polypeptide (ppy) (Aquarana catesbeiana (American bullfrog)).